A 150-amino-acid chain; its full sequence is D-aminoacyl-tRNA deacylase (150 aa).

A Gly-cisPro motif, important for rejection of L-amino acids motif is present at residues glycine 138–proline 139.

The protein belongs to the DTD family. As to quaternary structure, homodimer.

Its subcellular location is the cytoplasm. The catalysed reaction is glycyl-tRNA(Ala) + H2O = tRNA(Ala) + glycine + H(+). It catalyses the reaction a D-aminoacyl-tRNA + H2O = a tRNA + a D-alpha-amino acid + H(+). Its function is as follows. An aminoacyl-tRNA editing enzyme that deacylates mischarged D-aminoacyl-tRNAs. Also deacylates mischarged glycyl-tRNA(Ala), protecting cells against glycine mischarging by AlaRS. Acts via tRNA-based rather than protein-based catalysis; rejects L-amino acids rather than detecting D-amino acids in the active site. By recycling D-aminoacyl-tRNA to D-amino acids and free tRNA molecules, this enzyme counteracts the toxicity associated with the formation of D-aminoacyl-tRNA entities in vivo and helps enforce protein L-homochirality. The chain is D-aminoacyl-tRNA deacylase from Chromobacterium violaceum (strain ATCC 12472 / DSM 30191 / JCM 1249 / CCUG 213 / NBRC 12614 / NCIMB 9131 / NCTC 9757 / MK).